The sequence spans 483 residues: Shaker-related potassium channel tsha2 (483 aa).

The Cytoplasmic segment spans residues 1–165; that stretch reads MTVVSCEIQD…YPESSGPARM (165 aa). The helical transmembrane segment at 166-186 threads the bilayer; that stretch reads IAVVSVSVIVISIVIFCLETL. Topologically, residues 187–220 are extracellular; sequence PQFREDTSANLPLSNHHTTNGTTLHKKPNLFTDP. A helical membrane pass occupies residues 221 to 241; the sequence is FFMVETLCIVWFSFEFLVRFL. Over 242–252 the chain is Cytoplasmic; sequence SCPSKPAFFKN. C243 carries the S-palmitoyl cysteine lipid modification. Residues 253-273 traverse the membrane as a helical segment; it reads AMNSIDILAIAPYFITLGLEL. The Extracellular segment spans residues 274–324; that stretch reads AEQQEAGSEQAMSLAILRVIRLVRVFRIFKLSRHSKGLQILGQTLHASISE. The chain crosses the membrane as a helical; Voltage-sensor span at residues 325–345; sequence LGLLIFFLLIGVILFSSAVYF. The Cytoplasmic segment spans residues 346 to 353; that stretch reads AEADDPES. Residues 354 to 374 form a helical membrane-spanning segment; it reads GFSSIPAAFWWAVVSMTTVGY. The short motif at 371–376 is the Selectivity filter element; that stretch reads TVGYGD. Topologically, residues 375-385 are extracellular; sequence GDMCPVTIGGK. A helical transmembrane segment spans residues 386 to 406; that stretch reads IVGSMCAIAGVLTIALPVPVI. Over 407–483 the chain is Cytoplasmic; sequence VSNFNYFYHR…EHYTGKLTDV (77 aa). The residue at position 426 (Y426) is a Phosphotyrosine. T430 bears the Phosphothreonine mark. Over residues 440-452 the composition is skewed to polar residues; that stretch reads EFKSTSDSRQSLT. The interval 440–459 is disordered; the sequence is EFKSTSDSRQSLTKSEDTEE. The PDZ-binding motif lies at 481-483; that stretch reads TDV.

Belongs to the potassium channel family. A (Shaker) (TC 1.A.1.2) subfamily. As to quaternary structure, heterotetramer of potassium channel proteins. Binds PDZ domains of dlg1, dlg2 and dlg4. As to expression, expressed in oligodendrocytes and astrocytes.

It is found in the membrane. Its function is as follows. Mediates the voltage-dependent potassium ion permeability of excitable membranes. Assuming opened or closed conformations in response to the voltage difference across the membrane, the protein forms a potassium-selective channel through which potassium ions may pass in accordance with their electrochemical gradient. The sequence is that of Shaker-related potassium channel tsha2 from Oncorhynchus mykiss (Rainbow trout).